Here is a 153-residue protein sequence, read N- to C-terminus: Small ribosomal subunit protein uS19 (153 aa).

Residues 1 to 63 (MGFRGAWNKR…QEIWDEFRAF (63 aa)) form a unknown region. The interval 64–153 (VNKKAWVDPK…EKSAKVVKKK (90 aa)) is small ribosomal subunit protein uS19.

The protein belongs to the universal ribosomal protein uS19 family.

Functionally, protein S19 forms a complex with S13 that binds strongly to the 16S ribosomal RNA. The polypeptide is Small ribosomal subunit protein uS19 (Hydrogenobaculum sp. (strain Y04AAS1)).